We begin with the raw amino-acid sequence, 396 residues long: MTRLNPYFGEFGGMYVPQILMPALLQLEDAFISAQSDPAFQAEFTDLLKNYAGRPTALTRCLNLTKGSKTRLYLKREDLLHGGAHKTNQVLGQALLAKRMGKKEIIAETGAGQHGVASALACALLGLKCRIYMGAKDIERQSPNLFRMRLMGAEVIPVHSGSATLKDACNEALRDWSGSYETAHYMLGTAAGPHPFPTIVREFQRMIGEETKAQILQQEGRLPDAVIACVGGGSNAIGMFADFIDEPGVELIGVEPGGHGIESGEHGAPLKHGRVGIYFGMKSPMMQTADGQIEESYSISAGLDFPSVGPQHAHLNSIGRANYVSITDEEALDAFKALCRSEGIIPALESSHALAHALKMMREAPEKEQLLVVNLSGRGDKDIFTVHDILTAKGEI.

An N6-(pyridoxal phosphate)lysine modification is found at Lys-86.

Belongs to the TrpB family. Tetramer of two alpha and two beta chains. Pyridoxal 5'-phosphate is required as a cofactor.

The catalysed reaction is (1S,2R)-1-C-(indol-3-yl)glycerol 3-phosphate + L-serine = D-glyceraldehyde 3-phosphate + L-tryptophan + H2O. It functions in the pathway amino-acid biosynthesis; L-tryptophan biosynthesis; L-tryptophan from chorismate: step 5/5. Functionally, the beta subunit is responsible for the synthesis of L-tryptophan from indole and L-serine. In Erwinia tasmaniensis (strain DSM 17950 / CFBP 7177 / CIP 109463 / NCPPB 4357 / Et1/99), this protein is Tryptophan synthase beta chain.